The chain runs to 752 residues: Xanthine dehydrogenase molybdenum-binding subunit (752 aa).

Mo-molybdopterin is bound by residues glutamine 206, phenylalanine 237, arginine 350, and alanine 516.

It belongs to the xanthine dehydrogenase family. Heterotrimer of XdhA, XdhB and XdhC. The cofactor is Mo-molybdopterin.

It catalyses the reaction xanthine + NAD(+) + H2O = urate + NADH + H(+). The catalysed reaction is hypoxanthine + NAD(+) + H2O = xanthine + NADH + H(+). It participates in purine metabolism; hypoxanthine degradation; urate from hypoxanthine: step 1/2. Its pathway is purine metabolism; hypoxanthine degradation; urate from hypoxanthine: step 2/2. In terms of biological role, presumed to be a dehydrogenase, but possibly an oxidase. Participates in limited purine salvage (requires aspartate) but does not support aerobic growth on purines as the sole carbon source (purine catabolism). The chain is Xanthine dehydrogenase molybdenum-binding subunit (xdhA) from Escherichia coli O157:H7.